A 182-amino-acid polypeptide reads, in one-letter code: UPF0397 protein VV2_1534 (182 aa).

5 helical membrane passes run 8–28, 41–61, 72–92, 110–130, and 146–166; these read VVVI…MFGI, AVLA…VGFI, WGVW…IGLF, FSLF…CSAF, and QLTI…YFIL.

The protein belongs to the UPF0397 family.

Its subcellular location is the cell membrane. The protein is UPF0397 protein VV2_1534 of Vibrio vulnificus (strain CMCP6).